Consider the following 976-residue polypeptide: Vacuolar membrane protease (976 aa).

Residues 1–15 (MKLKSVFRSVLKYRK) lie on the Cytoplasmic side of the membrane. A helical membrane pass occupies residues 16–36 (TNLSLLLLITYSIITLLYIFD). Residues 37-359 (HERYKLNLPK…KFFVISAKTL (323 aa)) are Vacuolar-facing. Residues Asn-96 and Asn-121 are each glycosylated (N-linked (GlcNAc...) asparagine). Zn(2+)-binding residues include His-156 and Asp-168. Asn-189 carries an N-linked (GlcNAc...) asparagine glycan. The active-site Proton acceptor is Glu-200. Residue Glu-201 participates in Zn(2+) binding. N-linked (GlcNAc...) asparagine glycosylation is found at Asn-212 and Asn-217. Positions 226 and 300 each coordinate Zn(2+). The helical transmembrane segment at 360–380 (FYWNCIFLLVSPVVAIGLYLI) threads the bilayer. Residues 381 to 392 (SRDRMTWKSHSW) are Cytoplasmic-facing. The helical transmembrane segment at 393–412 (LSWTRFPLSLAAGIIVQKLF) threads the bilayer. Topologically, residues 413–428 (SNDIIRSNPLTFSRNY) are vacuolar. The chain crosses the membrane as a helical span at residues 429 to 449 (FWPISAFFTQVIFTSYVLINC). Residues 450-461 (SNFFFPCADMKS) are Cytoplasmic-facing. The helical transmembrane segment at 462–482 (LSIIELFIILWTILLFTSKLL) threads the bilayer. Residues 483 to 496 (YSSDYRYTGLYPLS) lie on the Vacuolar side of the membrane. A helical membrane pass occupies residues 497–517 (IFFLLSTIAAILRLLALALGM). At 518-627 (RTRKRLGREC…NSLKLEYTDY (110 aa)) the chain is on the cytoplasmic side. Residues 528-610 (RDHHSNYSSH…PLLKGSNSME (83 aa)) are disordered. The segment covering 549 to 558 (NLEQPQDQFT) has biased composition (polar residues). Over residues 559 to 570 (SSQDDQASIQDD) the composition is skewed to low complexity. Positions 582-601 (NVDEDHGMDSSSQQHDERVP) are enriched in basic and acidic residues. The chain crosses the membrane as a helical span at residues 628–648 (AWIIQFLLIVPIPSFILFNSV). The Vacuolar portion of the chain corresponds to 649–668 (DVIMDALNHTVQEGSKATFD). The N-linked (GlcNAc...) asparagine glycan is linked to Asn-656. A helical transmembrane segment spans residues 669–689 (VLRFGMVGSILMALPILPFFY). Residues 690 to 692 (KVN) are Cytoplasmic-facing. A helical membrane pass occupies residues 693 to 713 (YITISLTALLFLISASKTLLV). Over 714-976 (HPFTNSNPLK…LVIVKDAIIL (263 aa)) the chain is Vacuolar. Residues Asn-768, Asn-796, Asn-811, Asn-866, and Asn-937 are each glycosylated (N-linked (GlcNAc...) asparagine).

Belongs to the peptidase M28 family. It depends on Zn(2+) as a cofactor.

It is found in the vacuole membrane. Functionally, may be involved in vacuolar sorting and osmoregulation. In Saccharomyces cerevisiae (strain YJM789) (Baker's yeast), this protein is Vacuolar membrane protease.